Consider the following 358-residue polypeptide: Peptide chain release factor 1 (358 aa).

Residue glutamine 233 is modified to N5-methylglutamine.

The protein belongs to the prokaryotic/mitochondrial release factor family. Post-translationally, methylated by PrmC. Methylation increases the termination efficiency of RF1.

It is found in the cytoplasm. In terms of biological role, peptide chain release factor 1 directs the termination of translation in response to the peptide chain termination codons UAG and UAA. The protein is Peptide chain release factor 1 of Staphylococcus epidermidis (strain ATCC 35984 / DSM 28319 / BCRC 17069 / CCUG 31568 / BM 3577 / RP62A).